Reading from the N-terminus, the 493-residue chain is Aspartyl/glutamyl-tRNA(Asn/Gln) amidotransferase subunit B (493 aa).

Residues 473 to 493 (KSGGKANPKQAADLVNKRLTE) form a disordered region.

Belongs to the GatB/GatE family. GatB subfamily. Heterotrimer of A, B and C subunits.

The catalysed reaction is L-glutamyl-tRNA(Gln) + L-glutamine + ATP + H2O = L-glutaminyl-tRNA(Gln) + L-glutamate + ADP + phosphate + H(+). It catalyses the reaction L-aspartyl-tRNA(Asn) + L-glutamine + ATP + H2O = L-asparaginyl-tRNA(Asn) + L-glutamate + ADP + phosphate + 2 H(+). Its function is as follows. Allows the formation of correctly charged Asn-tRNA(Asn) or Gln-tRNA(Gln) through the transamidation of misacylated Asp-tRNA(Asn) or Glu-tRNA(Gln) in organisms which lack either or both of asparaginyl-tRNA or glutaminyl-tRNA synthetases. The reaction takes place in the presence of glutamine and ATP through an activated phospho-Asp-tRNA(Asn) or phospho-Glu-tRNA(Gln). This Treponema denticola (strain ATCC 35405 / DSM 14222 / CIP 103919 / JCM 8153 / KCTC 15104) protein is Aspartyl/glutamyl-tRNA(Asn/Gln) amidotransferase subunit B.